We begin with the raw amino-acid sequence, 276 residues long: Small ribosomal subunit protein uS2 (276 aa).

S2 bears the N-acetylserine mark.

This sequence belongs to the universal ribosomal protein uS2 family. In terms of assembly, component of the small ribosomal subunit. Mature ribosomes consist of a small (40S) and a large (60S) subunit. The 40S subunit contains about 33 different proteins and 1 molecule of RNA (18S). The 60S subunit contains about 49 different proteins and 3 molecules of RNA (28S, 5.8S and 5S). Interacts with rps-21.

It is found in the cytoplasm. Its function is as follows. Required for the assembly and/or stability of the 40S ribosomal subunit. Required for the processing of the 20S rRNA-precursor to mature 18S rRNA in a late step of the maturation of 40S ribosomal subunits. Involved in cold-warm shock-induced translocation of the RNA exosome components from the nucleolus to nucleoplasm. The sequence is that of Small ribosomal subunit protein uS2 from Caenorhabditis elegans.